Reading from the N-terminus, the 559-residue chain is Formate--tetrahydrofolate ligase (559 aa).

68 to 75 is a binding site for ATP; sequence TPAGEGKT.

This sequence belongs to the formate--tetrahydrofolate ligase family.

The enzyme catalyses (6S)-5,6,7,8-tetrahydrofolate + formate + ATP = (6R)-10-formyltetrahydrofolate + ADP + phosphate. It participates in one-carbon metabolism; tetrahydrofolate interconversion. The polypeptide is Formate--tetrahydrofolate ligase (Sinorhizobium fredii (strain NBRC 101917 / NGR234)).